Consider the following 264-residue polypeptide: Thymidylate synthase (264 aa).

R21 is a binding site for dUMP. H51 provides a ligand contact to (6R)-5,10-methylene-5,6,7,8-tetrahydrofolate. 126–127 serves as a coordination point for dUMP; it reads RR. C146 functions as the Nucleophile in the catalytic mechanism. DUMP contacts are provided by residues 166–169, N177, and 207–209; these read RSAD and HLY. D169 lines the (6R)-5,10-methylene-5,6,7,8-tetrahydrofolate pocket. A263 provides a ligand contact to (6R)-5,10-methylene-5,6,7,8-tetrahydrofolate.

This sequence belongs to the thymidylate synthase family. Bacterial-type ThyA subfamily. As to quaternary structure, homodimer.

It localises to the cytoplasm. The catalysed reaction is dUMP + (6R)-5,10-methylene-5,6,7,8-tetrahydrofolate = 7,8-dihydrofolate + dTMP. Its pathway is pyrimidine metabolism; dTTP biosynthesis. Functionally, catalyzes the reductive methylation of 2'-deoxyuridine-5'-monophosphate (dUMP) to 2'-deoxythymidine-5'-monophosphate (dTMP) while utilizing 5,10-methylenetetrahydrofolate (mTHF) as the methyl donor and reductant in the reaction, yielding dihydrofolate (DHF) as a by-product. This enzymatic reaction provides an intracellular de novo source of dTMP, an essential precursor for DNA biosynthesis. The sequence is that of Thymidylate synthase from Nitrosomonas eutropha (strain DSM 101675 / C91 / Nm57).